An 858-amino-acid polypeptide reads, in one-letter code: Myosin-K heavy chain (858 aa).

Positions 7 to 820 (SGVDDLVLVS…TIFVMEDLLM (814 aa)) constitute a Myosin motor domain. Position 100–107 (100–107 (GESGAGKT)) interacts with ATP. The interval 121-265 (SPNNSSGGGI…GGGYGGSSKT (145 aa)) is disordered. Gly residues-rich tracts occupy residues 126–139 (SGGGIGGSGGGNGG) and 157–182 (RGMGMPGMVGRGGLPTRGGGPPSRGG). Residues 183–228 (GPPPTRGRGGPPPPIPQNRGAPPPVSNGGAPPPVARGPVAPPPTRG) are compositionally biased toward pro residues. Over residues 233–245 (RGGGPANRGGRGG) the composition is skewed to gly residues. The actin-binding stretch occupies residues 712–722 (PHYIRCIKPND). The interval 821–858 (QKIDPIGYKNRVQAYKENEKLAQMKQGKHSMKQKCLIQ) is tail.

The protein belongs to the TRAFAC class myosin-kinesin ATPase superfamily. Myosin family.

It localises to the cytoplasm. Functionally, myosins are actin-based motor molecules with ATPase activity. Involved in phagocytosis and motility, and in the maintenance and dynamics of cell cortex. The chain is Myosin-K heavy chain (myoK) from Dictyostelium discoideum (Social amoeba).